The chain runs to 64 residues: Large ribosomal subunit protein uL29 (64 aa).

Belongs to the universal ribosomal protein uL29 family.

This Burkholderia ambifaria (strain MC40-6) protein is Large ribosomal subunit protein uL29.